Here is a 147-residue protein sequence, read N- to C-terminus: Hemoglobin subunit beta-1 (147 aa).

A Globin domain is found at 3-147 (EWTDKERSII…VVSALGKQYH (145 aa)). Heme b is bound by residues His64 and His93.

The protein belongs to the globin family. In terms of assembly, heterotetramer of two alpha chains and two beta chains. As to expression, red blood cells.

Functionally, involved in oxygen transport from gills to the various peripheral tissues. The chain is Hemoglobin subunit beta-1 (hbb1) from Pagothenia borchgrevinki (Bald rockcod).